The primary structure comprises 258 residues: Acyl-[acyl-carrier-protein]--UDP-N-acetylglucosamine O-acyltransferase (258 aa).

The protein belongs to the transferase hexapeptide repeat family. LpxA subfamily. As to quaternary structure, homotrimer.

Its subcellular location is the cytoplasm. It carries out the reaction a (3R)-hydroxyacyl-[ACP] + UDP-N-acetyl-alpha-D-glucosamine = a UDP-3-O-[(3R)-3-hydroxyacyl]-N-acetyl-alpha-D-glucosamine + holo-[ACP]. Its pathway is glycolipid biosynthesis; lipid IV(A) biosynthesis; lipid IV(A) from (3R)-3-hydroxytetradecanoyl-[acyl-carrier-protein] and UDP-N-acetyl-alpha-D-glucosamine: step 1/6. Its function is as follows. Involved in the biosynthesis of lipid A, a phosphorylated glycolipid that anchors the lipopolysaccharide to the outer membrane of the cell. The polypeptide is Acyl-[acyl-carrier-protein]--UDP-N-acetylglucosamine O-acyltransferase (Neisseria meningitidis serogroup C / serotype 2a (strain ATCC 700532 / DSM 15464 / FAM18)).